Here is a 99-residue protein sequence, read N- to C-terminus: Protein Frey (99 aa).

The helical transmembrane segment at 13–29 (AGLSLFALYLVLAAALL) threads the bilayer. The tract at residues 64–90 (RPKHPWPRGPRPLLSRAQQRKRDGPDM) is disordered.

Interacts with SPPL2C (via active sites); the interaction stabilizes FREY1 protein and inhibits SPPL2C proteolytic activity. Interacts with IZUMO1; the interaction retains IZUMO1 at the endoplasmic reticulum membrane and coordinates IZUMO1 complex assembly.

The protein resides in the endoplasmic reticulum membrane. Its function is as follows. Key regulator for male fertility expressed transiently in round spermatids where it recruits IZUMO1 at the endoplasmic reticulum (ER) membrane and coordinates the oolemmal binding multimeric complex (IZUMO1 complex) assembly. Upon complete assembly of the IZUMO1 complex, its ER retention is released, facilitating IZUMO1 complex export to the acrosome. Through the interaction with SPPL2C, inhibits its intramembrane protease activity directly accessing the catalytic center of an I-CLiP. The polypeptide is Protein Frey (FREY1) (Bos taurus (Bovine)).